The primary structure comprises 410 residues: Protein BTN2 (410 aa).

Disordered regions lie at residues I223–D264 and M276–I410. Composition is skewed to basic and acidic residues over residues S233–D264 and M276–L311. The stretch at N243–S330 forms a coiled coil. Over residues S334–D362 the composition is skewed to low complexity. Over residues T364 to T373 the composition is skewed to polar residues.

As to quaternary structure, interacts with RHB1, IST2, TDA3 and YIF1.

Its subcellular location is the cytoplasm. It localises to the late endosome. Functionally, V-SNARE binding protein that facilitates specific protein retrieval from a late endosome to the Golgi. Modulates the rate of arginine uptake. Involved in pH homeostasis. Required for the correct localization of IST2. May be involved in ion homeostasis together with IST2. The protein is Protein BTN2 (BTN2) of Saccharomyces cerevisiae (strain ATCC 204508 / S288c) (Baker's yeast).